The chain runs to 314 residues: tRNA-cytidine(32) 2-sulfurtransferase (314 aa).

The PP-loop motif motif lies at 57 to 62 (SGGKDS). The [4Fe-4S] cluster site is built by Cys-132, Cys-135, and Cys-223.

The protein belongs to the TtcA family. In terms of assembly, homodimer. It depends on Mg(2+) as a cofactor. [4Fe-4S] cluster serves as cofactor.

The protein localises to the cytoplasm. The enzyme catalyses cytidine(32) in tRNA + S-sulfanyl-L-cysteinyl-[cysteine desulfurase] + AH2 + ATP = 2-thiocytidine(32) in tRNA + L-cysteinyl-[cysteine desulfurase] + A + AMP + diphosphate + H(+). The protein operates within tRNA modification. Catalyzes the ATP-dependent 2-thiolation of cytidine in position 32 of tRNA, to form 2-thiocytidine (s(2)C32). The sulfur atoms are provided by the cysteine/cysteine desulfurase (IscS) system. This chain is tRNA-cytidine(32) 2-sulfurtransferase, found in Alkalilimnicola ehrlichii (strain ATCC BAA-1101 / DSM 17681 / MLHE-1).